The following is a 239-amino-acid chain: Carboxy-S-adenosyl-L-methionine synthase (239 aa).

Residues Tyr35, 64–66, 88–89, and Arg195 each bind S-adenosyl-L-methionine; these read GCS and DN.

The protein belongs to the class I-like SAM-binding methyltransferase superfamily. Cx-SAM synthase family. In terms of assembly, homodimer.

It catalyses the reaction prephenate + S-adenosyl-L-methionine = carboxy-S-adenosyl-L-methionine + 3-phenylpyruvate + H2O. Its function is as follows. Catalyzes the conversion of S-adenosyl-L-methionine (SAM) to carboxy-S-adenosyl-L-methionine (Cx-SAM). This Helicobacter pylori (strain Shi470) protein is Carboxy-S-adenosyl-L-methionine synthase.